Reading from the N-terminus, the 166-residue chain is UPF0304 protein VC_1871 (166 aa).

It belongs to the UPF0304 family.

In Vibrio cholerae serotype O1 (strain ATCC 39315 / El Tor Inaba N16961), this protein is UPF0304 protein VC_1871.